The following is a 404-amino-acid chain: S-adenosylmethionine synthase (404 aa).

Histidine 17 provides a ligand contact to ATP. Mg(2+) is bound at residue aspartate 19. Residue glutamate 45 coordinates K(+). 2 residues coordinate L-methionine: glutamate 58 and glutamine 101. Positions 101–111 (QSPDIAMGVDQ) are flexible loop. Residues 177-179 (DGK), 244-245 (RF), aspartate 253, 259-260 (RK), alanine 276, and lysine 280 each bind ATP. Aspartate 253 contributes to the L-methionine binding site. Residue lysine 284 coordinates L-methionine.

Belongs to the AdoMet synthase family. Homotetramer; dimer of dimers. The cofactor is Mg(2+). Requires K(+) as cofactor.

It is found in the cytoplasm. It catalyses the reaction L-methionine + ATP + H2O = S-adenosyl-L-methionine + phosphate + diphosphate. It participates in amino-acid biosynthesis; S-adenosyl-L-methionine biosynthesis; S-adenosyl-L-methionine from L-methionine: step 1/1. Catalyzes the formation of S-adenosylmethionine (AdoMet) from methionine and ATP. The overall synthetic reaction is composed of two sequential steps, AdoMet formation and the subsequent tripolyphosphate hydrolysis which occurs prior to release of AdoMet from the enzyme. This is S-adenosylmethionine synthase from Geobacillus thermodenitrificans (strain NG80-2).